The following is a 395-amino-acid chain: Cystathionine beta-lyase (395 aa).

N6-(pyridoxal phosphate)lysine is present on Lys210.

This sequence belongs to the trans-sulfuration enzymes family. Homotetramer. Requires pyridoxal 5'-phosphate as cofactor.

It localises to the cytoplasm. It catalyses the reaction L,L-cystathionine + H2O = L-homocysteine + pyruvate + NH4(+). The enzyme catalyses an S-substituted L-cysteine + H2O = a thiol + pyruvate + NH4(+). It participates in amino-acid biosynthesis; L-methionine biosynthesis via de novo pathway; L-homocysteine from L-cystathionine: step 1/1. Functionally, catalyzes the cleavage of cystathionine to homocysteine, pyruvate and ammonia during methionine biosynthesis. This chain is Cystathionine beta-lyase (metC), found in Salmonella typhimurium (strain LT2 / SGSC1412 / ATCC 700720).